We begin with the raw amino-acid sequence, 364 residues long: Chorismate synthase (364 aa).

NADP(+) is bound by residues arginine 48 and arginine 54. Residues 125-127 (RSS), 238-239 (NA), glycine 278, 293-297 (KPTSS), and arginine 319 contribute to the FMN site.

This sequence belongs to the chorismate synthase family. In terms of assembly, homotetramer. FMNH2 serves as cofactor.

It carries out the reaction 5-O-(1-carboxyvinyl)-3-phosphoshikimate = chorismate + phosphate. Its pathway is metabolic intermediate biosynthesis; chorismate biosynthesis; chorismate from D-erythrose 4-phosphate and phosphoenolpyruvate: step 7/7. Its function is as follows. Catalyzes the anti-1,4-elimination of the C-3 phosphate and the C-6 proR hydrogen from 5-enolpyruvylshikimate-3-phosphate (EPSP) to yield chorismate, which is the branch point compound that serves as the starting substrate for the three terminal pathways of aromatic amino acid biosynthesis. This reaction introduces a second double bond into the aromatic ring system. The sequence is that of Chorismate synthase from Shewanella frigidimarina (strain NCIMB 400).